A 373-amino-acid polypeptide reads, in one-letter code: Probable G-protein coupled receptor 173 (373 aa).

Over 1-26 the chain is Extracellular; it reads MANTTGEPEEVSGALSLPSASAYVKL. A glycan (N-linked (GlcNAc...) asparagine) is linked at Asn-3. Residues 27 to 47 form a helical membrane-spanning segment; sequence VLLGLIMCVSLAGNAILSLLV. Residues 48–59 are Cytoplasmic-facing; the sequence is LKERALHKAPYY. A helical membrane pass occupies residues 60 to 80; sequence FLLDLCLADGIRSAICFPFVL. The Extracellular segment spans residues 81-97; it reads ASVRHGSSWTFSALSCK. The cysteines at positions 96 and 174 are disulfide-linked. The helical transmembrane segment at 98–118 threads the bilayer; it reads IVAFMAVLFCFHAAFMLFCIS. Over 119–139 the chain is Cytoplasmic; the sequence is VTRYMAIAHHRFYAKRMTLWT. Residues 140–160 traverse the membrane as a helical segment; sequence CAAVICMAWTLSVAMAFPPVF. The Extracellular segment spans residues 161–188; the sequence is DVGTYKFIREEDQCIFEHRYFKANDTLG. The N-linked (GlcNAc...) asparagine glycan is linked to Asn-184. Residues 189 to 209 traverse the membrane as a helical segment; it reads FMLMLAVLMAATHAVYGKLLL. At 210-287 the chain is on the cytoplasmic side; it reads FEYRHRKMKP…VKGEKQLGRM (78 aa). Residues 288–308 form a helical membrane-spanning segment; it reads FYAITLLFLLLWSPYIVACYW. Topologically, residues 309–322 are extracellular; it reads RVFVKACAVPHRYL. The helical transmembrane segment at 323-343 threads the bilayer; the sequence is ATAVWMSFAQAAVNPIVCFLL. Topologically, residues 344–373 are cytoplasmic; that stretch reads NKDLKKCLRTHAPCWGTGGAPAPREPYCVM.

Belongs to the G-protein coupled receptor 1 family. Expressed in the ovary, specifically in granulosa cells of follicles that have passed the primary stage and in oocytes (at protein level). Expressed in preadipocytes.

It is found in the cell membrane. Is a receptor for the SMIM20 derived peptides Phoenixin-14 and Phoenixin-20. It mediates the Phoenixin-14 and Phoenixin-20 augmentation of gonadotropin-releasing hormone (GNRH) signaling in the hypothalamus and pituitary gland. In the ovary, it mediates the effects of Phoenixin-14 and Phoenixin-20 induced granulosa cell proliferation during follicular growth. This is Probable G-protein coupled receptor 173 (Gpr173) from Mus musculus (Mouse).